A 517-amino-acid chain; its full sequence is Dopamine receptor 4 (517 aa).

Over 1–46 (MLAYGSDPNAEDLYITMTPSVSTENDTTVWATEEPAAIVWRHPLLA) the chain is Extracellular. The N-linked (GlcNAc...) asparagine glycan is linked to Asn-25. A helical transmembrane segment spans residues 47 to 67 (IALFSICLLTVAGNCLVVIAV). Topologically, residues 68 to 77 (CTKKYLRNPT) are cytoplasmic. Residues 78 to 98 (GYLIISLAIADLIVGVIVMPM) traverse the membrane as a helical segment. Over 99-108 (NSLFEIANHT) the chain is Extracellular. Residue Asn-106 is glycosylated (N-linked (GlcNAc...) asparagine). The helical transmembrane segment at 109–129 (WLFGLMMCDVFHAMDILASTA) threads the bilayer. Residues 130–159 (SIWNLCVISLDRYMAGQDPIGYRDKVSKRR) are Cytoplasmic-facing. Residues 160 to 180 (ILMAILSVWVLSAILSFPGII) traverse the membrane as a helical segment. The Extracellular portion of the chain corresponds to 181 to 209 (WWRTSSPHLYEDQSQCLFTDSKMYVSFSS). A helical transmembrane segment spans residues 210 to 230 (LVSFYIPLFLILFAYGKVYII). Residues 231-409 (ATRHSKGMRM…YVHEQRAART (179 aa)) are Cytoplasmic-facing. The segment at 309–339 (NDRGEHNNNNTVRQPLLRGTEGCHSDSISRS) is disordered. A helical transmembrane segment spans residues 410 to 430 (LSIVVGAFILCWTPFFVFTPL). Residues 431–442 (TAFCESCFSNKE) lie on the Extracellular side of the membrane. The chain crosses the membrane as a helical span at residues 443–463 (TIFTFVTWAGHLNSMLNPLIY). Residues 464 to 517 (SRFSRDFRRAFKQILTCQRQQKVKTAFKTPLSLVFTQLISVTQMWEQPPNTSIE) lie on the Cytoplasmic side of the membrane.

It belongs to the G-protein coupled receptor 1 family. Expressed in pharyngeal neurons I1 and I2, neurons ASG, AVL, CAN, PQR, vulva, intestine, rectal glands and rectal epithelial glands. Also expressed in neurons in ray 8 in males.

The protein resides in the cell membrane. Functionally, receptor for dopamine. The activity of this receptor is mediated by G proteins which activate adenylyl cyclase. In terms of antagonist responses, would be classed with the D1-like dopamine receptor group. This is Dopamine receptor 4 (dop-4) from Caenorhabditis elegans.